A 477-amino-acid chain; its full sequence is TNF receptor-associated factor family protein DDB_G0278133 (477 aa).

The segment at 45 to 88 (CDICTLELFIESEPKALQCKEGHLACRRCWERYLSTNKQCMTCK) adopts an RING-type; degenerate zinc-finger fold. 2 consecutive TRAF-type zinc fingers follow at residues 160-211 (NHYK…SSLS) and 212-267 (DHHK…SKMQ). Residues 271–326 (LEHSVTKLMNQNEIIKKDNQNLDQEKKIEEIKLKLNNLLNNYIQLKNEIAVLKQNS) are a coiled coil. The 133-residue stretch at 331–463 (VYSNKWIIPE…FLNEKGELEI (133 aa)) folds into the MATH domain.

This sequence belongs to the TNF receptor-associated factor family. A subfamily.

Its subcellular location is the cytoplasm. Functionally, probable adapter protein and signal transducer that links members of the tumor necrosis factor receptor family to different signaling pathways by association with the receptor cytoplasmic domain and kinases. The polypeptide is TNF receptor-associated factor family protein DDB_G0278133 (Dictyostelium discoideum (Social amoeba)).